A 486-amino-acid chain; its full sequence is B-type cell cycle switch protein ccs52B (486 aa).

Residues 24-36 (RLETLSTPPSSAS) carry the PEST motif motif. A compositionally biased stretch (polar residues) spans 27-36 (TLSTPPSSAS). The tract at residues 27–57 (TLSTPPSSASPRAISNLSSTPSPSKSSKCSD) is disordered. The segment covering 41 to 53 (SNLSSTPSPSKSS) has biased composition (low complexity). Residues 57–63 (DRFIPCR) carry the C-box motif. The CSM motif signature appears at 87 to 98 (AYNRLLKSELFG). 7 WD repeats span residues 177 to 214 (QDDFYLNLVDWSSQNTLAVGLGTCVYLWSASNSKVTKL), 218 to 257 (GPYDGVCSVQWTKEGSFISIGTNGGQVQIWDGTKCKKVRT), 260 to 297 (GHQTRTGVLAWNSRILASGSRDRNILQHDMRVPSDFIG), 301 to 340 (GHKSEVCGLKWSCDDRELASGGNDNQLLVWNQHSQQPTLR), 343 to 385 (EHTA…QLNS), 387 to 428 (DTGS…KVAT), and 431 to 470 (GHSMRVLYLAMSPDGQTIVTGAGDETLRFWNVFPSMKTPA).

Belongs to the WD repeat CDC20/Fizzy family. As to expression, mostly expressed in shoot apices and, to a lower extent, in roots, especially in root tips, and in hypocotyls. Expressed in nodulation-competent root zone but not in the nodules.

The protein operates within protein modification; protein ubiquitination. In terms of biological role, component of the anaphase promoting complex/cyclosome (APC/C), a cell cycle-regulated E3 ubiquitin-protein ligase complex that controls progression through mitosis and the G1 phase of the cell cycle. In Medicago truncatula (Barrel medic), this protein is B-type cell cycle switch protein ccs52B.